The chain runs to 252 residues: Thiazole synthase (252 aa).

K98 acts as the Schiff-base intermediate with DXP in catalysis. Residues G159, 185 to 186 (AG), and 207 to 208 (AT) contribute to the 1-deoxy-D-xylulose 5-phosphate site.

It belongs to the ThiG family. In terms of assembly, homotetramer. Forms heterodimers with either ThiH or ThiS.

It localises to the cytoplasm. The enzyme catalyses [ThiS sulfur-carrier protein]-C-terminal-Gly-aminoethanethioate + 2-iminoacetate + 1-deoxy-D-xylulose 5-phosphate = [ThiS sulfur-carrier protein]-C-terminal Gly-Gly + 2-[(2R,5Z)-2-carboxy-4-methylthiazol-5(2H)-ylidene]ethyl phosphate + 2 H2O + H(+). It functions in the pathway cofactor biosynthesis; thiamine diphosphate biosynthesis. Its function is as follows. Catalyzes the rearrangement of 1-deoxy-D-xylulose 5-phosphate (DXP) to produce the thiazole phosphate moiety of thiamine. Sulfur is provided by the thiocarboxylate moiety of the carrier protein ThiS. In vitro, sulfur can be provided by H(2)S. The sequence is that of Thiazole synthase from Mycolicibacterium smegmatis (strain ATCC 700084 / mc(2)155) (Mycobacterium smegmatis).